Consider the following 995-residue polypeptide: Zinc finger protein ZFPM1 (995 aa).

Basic residues predominate over residues M1–R14. The disordered stretch occupies residues M1–G103. Residues S15–E36 show a composition bias toward basic and acidic residues. Composition is skewed to acidic residues over residues S67–E78 and E86–A95. A phosphoserine mark is found at S99 and S143. Residues V249–Q282 form a CCHC FOG-type 1 zinc finger. Residues C257, C260, H273, and C278 each coordinate Zn(2+). Phosphoserine is present on S286. 3 consecutive C2H2-type zinc fingers follow at residues R303–H327, F333–H355, and G361–H384. Residues T343–V354 are interaction with TACC3. Phosphoserine is present on residues S397, S497, and S500. Residues P424–M526 form a disordered region. A compositionally biased stretch (low complexity) spans E509–T525. Residues F584 to R617 form a CCHC FOG-type 2 zinc finger. Positions 592, 595, 608, and 613 each coordinate Zn(2+). The interval R616–S694 is disordered. The segment covering A630 to P652 has biased composition (low complexity). Phosphoserine occurs at positions 651 and 684. Residues E690 to H723 form a CCHC FOG-type 3 zinc finger. Residues C698, C701, H714, and C719 each coordinate Zn(2+). The segment at S721–T827 is disordered. Pro residues-rich tracts occupy residues R728–A740 and G764–P779. The span at L785–P800 shows a compositional bias: low complexity. S803 is modified (phosphoserine). An interaction with CTBP2 region spans residues P811–R817. S822 bears the Phosphoserine mark. A CCHC FOG-type 4 zinc finger spans residues P830–P863. Zn(2+)-binding residues include C838, C841, H854, and C859. The C2H2-type 4 zinc finger occupies A868–H891. The segment at G892 to G960 is disordered. Over residues T908–A922 the composition is skewed to basic and acidic residues. S925 and S927 each carry phosphoserine. The segment at G957–A990 adopts a CCHC FOG-type 5 zinc-finger fold. Zn(2+) contacts are provided by C965, C968, H981, and C986.

This sequence belongs to the FOG (Friend of GATA) family. As to quaternary structure, interacts with the N-terminal zinc-finger of GATA1, GATA2 and GATA3. Interacts with corepressor CTBP2; this interaction is however not essential for corepressor activity in erythropoiesis. Interacts with TACC3. As to expression, mainly expressed in hematopoietic tissues. Expressed in the spleen, a primary site of hematopoiesis in the adult mouse, as well as in the liver and testis, but not in the heart, brain, lung, kidney, or skeletal muscle. Among hematopoietic cell lines, it is strongly expressed in erythroid and megakaryocytic cell lines. Expressed at low level in several lymphoid and early myeloid cell lines. Not expressed in mast cell and macrophage lines. Expressed in the heart, where it colocalizes with GATA4, GATA5 and GATA6.

The protein resides in the nucleus. Transcription regulator that plays an essential role in erythroid and megakaryocytic cell differentiation. Essential cofactor that acts via the formation of a heterodimer with transcription factors of the GATA family GATA1, GATA2 and GATA3. Such heterodimer can both activate or repress transcriptional activity, depending on the cell and promoter context. The heterodimer formed with GATA proteins is essential to activate expression of genes such as NFE2, ITGA2B, alpha- and beta-globin, while it represses expression of KLF1. May be involved in regulation of some genes in gonads. May also be involved in cardiac development, in a non-redundant way with ZFPM2/FOG2. The sequence is that of Zinc finger protein ZFPM1 (Zfpm1) from Mus musculus (Mouse).